The sequence spans 312 residues: Mycothiol acetyltransferase (312 aa).

2 N-acetyltransferase domains span residues 8 to 136 (PIIR…LPMP) and 149 to 301 (LRLD…HQDH). E38 lines the 1D-myo-inositol 2-(L-cysteinylamino)-2-deoxy-alpha-D-glucopyranoside pocket. Residues 77–79 (LMV) and 85–90 (RQGIAT) each bind acetyl-CoA. Residues E175, K215, and E226 each coordinate 1D-myo-inositol 2-(L-cysteinylamino)-2-deoxy-alpha-D-glucopyranoside. Acetyl-CoA is bound by residues 230–232 (LGV) and 237–243 (EGKGVGR). Residue Y264 coordinates 1D-myo-inositol 2-(L-cysteinylamino)-2-deoxy-alpha-D-glucopyranoside. An acetyl-CoA-binding site is contributed by 269–274 (NERVVH). Residues 292 to 312 (PAKPARHQDHGRQSSPQERDA) form a disordered region. Residues 297 to 312 (RHQDHGRQSSPQERDA) are compositionally biased toward basic and acidic residues.

This sequence belongs to the acetyltransferase family. MshD subfamily. As to quaternary structure, monomer.

It carries out the reaction 1D-myo-inositol 2-(L-cysteinylamino)-2-deoxy-alpha-D-glucopyranoside + acetyl-CoA = mycothiol + CoA + H(+). Its function is as follows. Catalyzes the transfer of acetyl from acetyl-CoA to desacetylmycothiol (Cys-GlcN-Ins) to form mycothiol. This Propionibacterium freudenreichii subsp. shermanii (strain ATCC 9614 / DSM 4902 / CIP 103027 / NCIMB 8099 / CIRM-BIA1) protein is Mycothiol acetyltransferase.